The sequence spans 571 residues: Potassium-transporting ATPase potassium-binding subunit (571 aa).

10 helical membrane-spanning segments follow: residues 7–27, 66–86, 137–157, 188–208, 255–275, 286–306, 390–410, 430–450, 497–517, and 538–558; these read LQFAALIAVLLLTAPALGGYL, TYALSVLAFSVMSFLLLYGIA, GLAVQNFVSASAGMCVLAALI, FVVAILLVSQGVIQNLHGFIV, IGNFVENWAILIIPFALCFAF, WAVLAIMGIIWIGMSVAAMSF, VGLNGLLVMAILAVFIAGLMV, TLYILAMPIALLSFAAASVLI, IGVAMLIGRFFLIIPVLAIAG, and LFVGLVIGVVLIVGGLTFFPA.

The protein belongs to the KdpA family. In terms of assembly, the system is composed of three essential subunits: KdpA, KdpB and KdpC.

The protein localises to the cell membrane. In terms of biological role, part of the high-affinity ATP-driven potassium transport (or Kdp) system, which catalyzes the hydrolysis of ATP coupled with the electrogenic transport of potassium into the cytoplasm. This subunit binds the extracellular potassium ions and delivers the ions to the membrane domain of KdpB through an intramembrane tunnel. This chain is Potassium-transporting ATPase potassium-binding subunit, found in Mycobacterium bovis (strain ATCC BAA-935 / AF2122/97).